We begin with the raw amino-acid sequence, 626 residues long: Chaperone protein HtpG (626 aa).

An a; substrate-binding region spans residues 1-341 (METKQFKAES…SEDLSLNISR (341 aa)). The segment at 342-552 (EILQHDRQLK…EGELSIEMEK (211 aa)) is b. Positions 490-509 (DLGIEGEEKENTSNSDDKEN) are disordered. A compositionally biased stretch (basic and acidic residues) spans 498–509 (KENTSNSDDKEN). A c region spans residues 553–626 (VLNAMPNNQN…FTNNICKIMK (74 aa)).

The protein belongs to the heat shock protein 90 family. As to quaternary structure, homodimer.

Its subcellular location is the cytoplasm. In terms of biological role, molecular chaperone. Has ATPase activity. This chain is Chaperone protein HtpG, found in Clostridium botulinum (strain ATCC 19397 / Type A).